The following is a 497-amino-acid chain: SPI-2 type 3 secretion system secretin (497 aa).

Residues M1 to S20 form the signal peptide.

The protein belongs to the bacterial secretin family. T3SS SctC subfamily. As to quaternary structure, the core secretion machinery of the T3SS is composed of approximately 20 different proteins, including cytoplasmic components, a base, an export apparatus and a needle. This subunit is part of the base, which anchors the injectisome in the bacterial cell envelope. Forms a stable homooligomeric complex.

Its subcellular location is the cell outer membrane. Its function is as follows. Component of the type III secretion system (T3SS), also called injectisome, which is used to inject bacterial effector proteins into eukaryotic host cells. Forms a ring-shaped multimeric structure with an apparent central pore in the outer membrane. Required for secretion of some type III-secreted effectors including the SpvB exotoxin. The chain is SPI-2 type 3 secretion system secretin from Salmonella typhimurium (strain 14028s / SGSC 2262).